The chain runs to 342 residues: MQYSSRFLELNIPDSFLNINKIPDATKFITVTYICLTATLFCIRRSLYNKLVLEDPNLDYNLITSPLLQMVPSQIWRYPTSLVLSNFIDTKAWKVVVNLLNLIIGGSFIERNWNSSKEMFKFIIVLGSLTNVLIIMLTLLVSFFSNKVRLDIPLDGNYTILIGFPIIYRQLLPETTIIHLKTPQFLAKNFRFKLLPIFVMFTMTVTQIIWFHHFAQLFSIWVTFFASWSYLRFFQKLAPLNCPSLPTTNSQGGQEILVGDASDTFQLIYFFPDLIKPILRPIFNFIYNVVVVKFKVIKPFHDIDIDIGNTIAESRGAKKIMTVEERRRQLALQVLEERMVNP.

The Cytoplasmic portion of the chain corresponds to 1–21 (MQYSSRFLELNIPDSFLNINK). Residues 22–42 (IPDATKFITVTYICLTATLFC) form a helical membrane-spanning segment. Residues 43 to 121 (IRRSLYNKLV…NWNSSKEMFK (79 aa)) are Lumenal-facing. Asparagine 114 carries an N-linked (GlcNAc...) asparagine glycan. Residues 122–142 (FIIVLGSLTNVLIIMLTLLVS) traverse the membrane as a helical segment. Residues 143 to 159 (FFSNKVRLDIPLDGNYT) lie on the Cytoplasmic side of the membrane. The helical transmembrane segment at 160 to 180 (ILIGFPIIYRQLLPETTIIHL) threads the bilayer. Residues 181–207 (KTPQFLAKNFRFKLLPIFVMFTMTVTQ) are Lumenal-facing. The chain crosses the membrane as a helical span at residues 208–228 (IIWFHHFAQLFSIWVTFFASW). The Cytoplasmic segment spans residues 229 to 342 (SYLRFFQKLA…QVLEERMVNP (114 aa)).

The protein belongs to the TMEM115 family. As to quaternary structure, homooligomer.

It localises to the golgi apparatus membrane. May play a role in retrograde transport of proteins from the Golgi to the endoplasmic reticulum. In Saccharomyces cerevisiae (strain ATCC 204508 / S288c) (Baker's yeast), this protein is Transmembrane protein 115 homolog.